A 135-amino-acid polypeptide reads, in one-letter code: MARTKQTARKSTGGKAPRKAVATKARKTAPPVGGVKKPHRFRPGTVALREIRRYQKSTELLIRKLPFQRLVREIAQDFKTDLRFQSAAIAALQEAAEAYLVGLFEDTNLCAIHAKRVTIMPKDIQLARRIRGERA.

The segment at methionine 1–arginine 40 is disordered. Positions lysine 19–proline 31 are enriched in low complexity.

Belongs to the histone H3 family. The nucleosome is a histone octamer containing two molecules each of H2A, H2B, H3 and H4 assembled in one H3-H4 heterotetramer and two H2A-H2B heterodimers. The octamer wraps approximately 147 bp of DNA.

It localises to the nucleus. The protein localises to the chromosome. In terms of biological role, core component of nucleosome. Nucleosomes wrap and compact DNA into chromatin, limiting DNA accessibility to the cellular machineries which require DNA as a template. Histones thereby play a central role in transcription regulation, DNA repair, DNA replication and chromosomal stability. DNA accessibility is regulated via a complex set of post-translational modifications of histones, also called histone code, and nucleosome remodeling. This Mastigamoeba balamuthi (Phreatamoeba balamuthi) protein is Histone H3.